A 639-amino-acid polypeptide reads, in one-letter code: Chaperone protein DnaK (639 aa).

Thr-198 is subject to Phosphothreonine; by autocatalysis. The tract at residues 604-639 (KSQAQGGDNADAGKQANAAADDVVDAEFEEVKDDKK) is disordered. Residues 606-624 (QAQGGDNADAGKQANAAAD) are compositionally biased toward low complexity. Over residues 625–639 (DVVDAEFEEVKDDKK) the composition is skewed to acidic residues.

This sequence belongs to the heat shock protein 70 family.

Acts as a chaperone. The polypeptide is Chaperone protein DnaK (Shewanella baltica (strain OS223)).